The primary structure comprises 246 residues: DNA repair protein RecO (246 aa).

Belongs to the RecO family.

In terms of biological role, involved in DNA repair and RecF pathway recombination. The chain is DNA repair protein RecO from Methylorubrum populi (strain ATCC BAA-705 / NCIMB 13946 / BJ001) (Methylobacterium populi).